The sequence spans 572 residues: Urease subunit alpha (572 aa).

The region spanning 131-572 (GGIDAHIHFI…LPLAQRYFLF (442 aa)) is the Urease domain. Residues His136, His138, and Lys219 each contribute to the Ni(2+) site. Lys219 is modified (N6-carboxylysine). A substrate-binding site is contributed by His221. Ni(2+)-binding residues include His248 and His274. The active-site Proton donor is the His322. Asp362 is a Ni(2+) binding site.

Belongs to the metallo-dependent hydrolases superfamily. Urease alpha subunit family. Heterotrimer of UreA (gamma), UreB (beta) and UreC (alpha) subunits. Three heterotrimers associate to form the active enzyme. It depends on Ni cation as a cofactor. Post-translationally, carboxylation allows a single lysine to coordinate two nickel ions.

Its subcellular location is the cytoplasm. The enzyme catalyses urea + 2 H2O + H(+) = hydrogencarbonate + 2 NH4(+). The protein operates within nitrogen metabolism; urea degradation; CO(2) and NH(3) from urea (urease route): step 1/1. In Thermosynechococcus vestitus (strain NIES-2133 / IAM M-273 / BP-1), this protein is Urease subunit alpha.